Here is a 388-residue protein sequence, read N- to C-terminus: tRNA(Ile)-lysidine synthase (388 aa).

51–56 contacts ATP; sequence SGGRDS.

Belongs to the tRNA(Ile)-lysidine synthase family.

It is found in the cytoplasm. It catalyses the reaction cytidine(34) in tRNA(Ile2) + L-lysine + ATP = lysidine(34) in tRNA(Ile2) + AMP + diphosphate + H(+). Its function is as follows. Ligates lysine onto the cytidine present at position 34 of the AUA codon-specific tRNA(Ile) that contains the anticodon CAU, in an ATP-dependent manner. Cytidine is converted to lysidine, thus changing the amino acid specificity of the tRNA from methionine to isoleucine. This Bifidobacterium longum (strain NCC 2705) protein is tRNA(Ile)-lysidine synthase.